Reading from the N-terminus, the 379-residue chain is Cytochrome b (379 aa).

Transmembrane regions (helical) follow at residues 33–53 (FGSLLGVCLMIQILTGLFLAM), 77–98 (WLIRYLHANGASMFFICLFIHV), 113–133 (WNIGIILFLTTMATAFVGYVL), and 178–198 (FFAFHFILPFIITAFVLVHLL). Residues His83 and His97 each contribute to the heme b site. Heme b contacts are provided by His182 and His196. His201 is an a ubiquinone binding site. A run of 4 helical transmembrane segments spans residues 226 to 246 (IKDLLGILFLLMALMILALFF), 288 to 308 (LGGVLALLLSIIILAAFPLLN), 320 to 340 (VTQTIYWIFIANLLVLTWIGG), and 347 to 367 (FTMIGQIASVIYFATIIVLMP).

It belongs to the cytochrome b family. As to quaternary structure, the cytochrome bc1 complex contains 11 subunits: 3 respiratory subunits (MT-CYB, CYC1 and UQCRFS1), 2 core proteins (UQCRC1 and UQCRC2) and 6 low-molecular weight proteins (UQCRH/QCR6, UQCRB/QCR7, UQCRQ/QCR8, UQCR10/QCR9, UQCR11/QCR10 and a cleavage product of UQCRFS1). This cytochrome bc1 complex then forms a dimer. Heme b serves as cofactor.

It localises to the mitochondrion inner membrane. Its function is as follows. Component of the ubiquinol-cytochrome c reductase complex (complex III or cytochrome b-c1 complex) that is part of the mitochondrial respiratory chain. The b-c1 complex mediates electron transfer from ubiquinol to cytochrome c. Contributes to the generation of a proton gradient across the mitochondrial membrane that is then used for ATP synthesis. The sequence is that of Cytochrome b (MT-CYB) from Akodon iniscatus (Intelligent grass mouse).